Reading from the N-terminus, the 885-residue chain is DDT domain-containing protein DDB_G0282237 (885 aa).

In terms of domain architecture, WAC spans 20–125; sequence EEYFVIKFTK…GEIVSFKKAN (106 aa). Disordered stretches follow at residues 141–184, 201–264, and 367–431; these read ESDE…INAL, DDEN…SVRK, and LEDT…KENE. The segment covering 154–180 has biased composition (low complexity); sequence SSSSSSTTTTTTTPTTPPTTTTTTSSS. Basic and acidic residues predominate over residues 210-264; sequence KNNGDTSSDKKGEKEKEKEKEKEKEKEKEKEKEKEKEKEKEKEKEKDSDTKSVRK. A coiled-coil region spans residues 217 to 260; sequence SDKKGEKEKEKEKEKEKEKEKEKEKEKEKEKEKEKEKEKDSDTK. The span at 367–379 shows a compositional bias: acidic residues; the sequence is LEDTEEESVDIES. A compositionally biased stretch (low complexity) spans 380 to 396; the sequence is NDNSNSNGNSNSNNNLD. Residues 443–503 form the DDT domain; that stretch reads SNTFGDFLMV…MKTIFTLPSY (61 aa). Positions 530–565 form a coiled coil; it reads FQNEVKRIAIEEKEKQEKLKQLEEQNIRMLNLANEL. Disordered regions lie at residues 562–632 and 707–744; these read ANEL…WKEE and KQDD…QKKP. Acidic residues predominate over residues 567-577; it reads GSDDEDDEMKL. The span at 578 to 603 shows a compositional bias: basic and acidic residues; it reads DEDGNEIKKDVEMKDNDGTKDTKKDD. Coiled coils occupy residues 593–628 and 674–782; these read NDGT…GEEE and ASEK…RDRN. Composition is skewed to acidic residues over residues 604–631 and 715–729; these read EENE…EWKE and AEDD…EEQQ.

It is found in the nucleus. The polypeptide is DDT domain-containing protein DDB_G0282237 (Dictyostelium discoideum (Social amoeba)).